Here is a 137-residue protein sequence, read N- to C-terminus: uncharacterized protein (137 aa).

This is an uncharacterized protein from Escherichia coli (strain K12).